The following is a 448-amino-acid chain: ATP-dependent protease ATPase subunit HslU (448 aa).

ATP-binding positions include Ile18, Gly60 to Glu65, Asp261, Glu326, and Arg398.

Belongs to the ClpX chaperone family. HslU subfamily. A double ring-shaped homohexamer of HslV is capped on each side by a ring-shaped HslU homohexamer. The assembly of the HslU/HslV complex is dependent on binding of ATP.

Its subcellular location is the cytoplasm. ATPase subunit of a proteasome-like degradation complex; this subunit has chaperone activity. The binding of ATP and its subsequent hydrolysis by HslU are essential for unfolding of protein substrates subsequently hydrolyzed by HslV. HslU recognizes the N-terminal part of its protein substrates and unfolds these before they are guided to HslV for hydrolysis. This chain is ATP-dependent protease ATPase subunit HslU, found in Paraburkholderia xenovorans (strain LB400).